Consider the following 65-residue polypeptide: MRCLPVFIILLLLIPSAPSVDAQRKTKDDVPLASFHDNAKRTLKRLWNKRSCCPQEFLCCLYLVK.

Positions 1–19 (MRCLPVFIILLLLIPSAPS) are cleaved as a signal peptide. Residues 20–48 (VDAQRKTKDDVPLASFHDNAKRTLKRLWN) constitute a propeptide that is removed on maturation.

The protein belongs to the conotoxin T superfamily. Post-translationally, contains 2 disulfide bonds that can be either 'C1-C3, C2-C4' or 'C1-C4, C2-C3', since these disulfide connectivities have been observed for conotoxins with cysteine framework V (for examples, see AC P0DQQ7 and AC P81755). In terms of tissue distribution, expressed by the venom duct.

It localises to the secreted. The protein is Conotoxin Lt5.1 of Conus litteratus (Lettered cone).